The sequence spans 280 residues: Acetyl-coenzyme A carboxylase carboxyl transferase subunit beta (280 aa).

In terms of domain architecture, CoA carboxyltransferase N-terminal spans 26-280; that stretch reads LWQKCPRCGE…TKLLAWHSQK (255 aa). Residues cysteine 30, cysteine 33, cysteine 49, and cysteine 52 each contribute to the Zn(2+) site. Residues 30-52 form a C4-type zinc finger; it reads CPRCGEIIFNKELEKNFKVCPKC.

This sequence belongs to the AccD/PCCB family. In terms of assembly, acetyl-CoA carboxylase is a heterohexamer composed of biotin carboxyl carrier protein (AccB), biotin carboxylase (AccC) and two subunits each of ACCase subunit alpha (AccA) and ACCase subunit beta (AccD). Zn(2+) serves as cofactor.

Its subcellular location is the cytoplasm. It catalyses the reaction N(6)-carboxybiotinyl-L-lysyl-[protein] + acetyl-CoA = N(6)-biotinyl-L-lysyl-[protein] + malonyl-CoA. It participates in lipid metabolism; malonyl-CoA biosynthesis; malonyl-CoA from acetyl-CoA: step 1/1. Functionally, component of the acetyl coenzyme A carboxylase (ACC) complex. Biotin carboxylase (BC) catalyzes the carboxylation of biotin on its carrier protein (BCCP) and then the CO(2) group is transferred by the transcarboxylase to acetyl-CoA to form malonyl-CoA. The sequence is that of Acetyl-coenzyme A carboxylase carboxyl transferase subunit beta from Carboxydothermus hydrogenoformans (strain ATCC BAA-161 / DSM 6008 / Z-2901).